The primary structure comprises 100 residues: uncharacterized protein (100 aa).

The protein localises to the virion. This is an uncharacterized protein from Acanthamoeba polyphaga mimivirus (APMV).